A 118-amino-acid polypeptide reads, in one-letter code: Diacylglycerol kinase (118 aa).

An a divalent metal cation-binding site is contributed by Glu28. The next 2 helical transmembrane spans lie at 29–49 and 55–75; these read TAFRHECFLACILIPLTFFLG and IILMISSVLLVMALELLNSAV. Catalysis depends on Glu69, which acts as the Proton acceptor. A divalent metal cation is bound at residue Glu76. Residues 98–118 traverse the membrane as a helical segment; the sequence is SASVFIALCIVGIVWGGILFF.

It belongs to the bacterial diacylglycerol kinase family. Mg(2+) serves as cofactor.

Its subcellular location is the cell inner membrane. It carries out the reaction a 1,2-diacyl-sn-glycerol + ATP = a 1,2-diacyl-sn-glycero-3-phosphate + ADP + H(+). Catalyzes the ATP-dependent phosphorylation of sn-l,2-diacylglycerol (DAG) to phosphatidic acid. Involved in the recycling of diacylglycerol produced as a by-product during membrane-derived oligosaccharide (MDO) biosynthesis. The sequence is that of Diacylglycerol kinase (dgkA) from Haemophilus influenzae (strain ATCC 51907 / DSM 11121 / KW20 / Rd).